A 182-amino-acid chain; its full sequence is Acireductone dioxygenase (182 aa).

Fe(2+)-binding residues include His100, His102, Glu106, and His145. 4 residues coordinate Ni(2+): His100, His102, Glu106, and His145.

This sequence belongs to the acireductone dioxygenase (ARD) family. In terms of assembly, monomer. Fe(2+) is required as a cofactor. Ni(2+) serves as cofactor.

It carries out the reaction 1,2-dihydroxy-5-(methylsulfanyl)pent-1-en-3-one + O2 = 3-(methylsulfanyl)propanoate + CO + formate + 2 H(+). It catalyses the reaction 1,2-dihydroxy-5-(methylsulfanyl)pent-1-en-3-one + O2 = 4-methylsulfanyl-2-oxobutanoate + formate + 2 H(+). It functions in the pathway amino-acid biosynthesis; L-methionine biosynthesis via salvage pathway; L-methionine from S-methyl-5-thio-alpha-D-ribose 1-phosphate: step 5/6. Functionally, catalyzes 2 different reactions between oxygen and the acireductone 1,2-dihydroxy-3-keto-5-methylthiopentene (DHK-MTPene) depending upon the metal bound in the active site. Fe-containing acireductone dioxygenase (Fe-ARD) produces formate and 2-keto-4-methylthiobutyrate (KMTB), the alpha-ketoacid precursor of methionine in the methionine recycle pathway. Ni-containing acireductone dioxygenase (Ni-ARD) produces methylthiopropionate, carbon monoxide and formate, and does not lie on the methionine recycle pathway. In Nostoc sp. (strain PCC 7120 / SAG 25.82 / UTEX 2576), this protein is Acireductone dioxygenase.